A 385-amino-acid polypeptide reads, in one-letter code: 3-hydroxyisobutyryl-CoA hydrolase, mitochondrial (385 aa).

The transit peptide at 1-32 (MGQPYAWRLLSRVSSFRRASVILQHLRMSMHT) directs the protein to the mitochondrion. 3 positions are modified to N6-acetyllysine; alternate: K54, K91, and K100. N6-succinyllysine; alternate occurs at positions 54, 91, and 100. Residues E120, G145, E168, and D176 each contribute to the substrate site. K220 carries the N6-acetyllysine; alternate modification. K220 bears the N6-succinyllysine; alternate mark. The residue at position 233 (S233) is a Phosphoserine. K249 and K256 each carry N6-succinyllysine. K296 carries the post-translational modification N6-acetyllysine; alternate. K296 carries the N6-succinyllysine; alternate modification. K300 bears the N6-succinyllysine mark. An N6-acetyllysine; alternate modification is found at K352. K352 is modified (N6-succinyllysine; alternate). N6-acetyllysine occurs at positions 359 and 364. The residue at position 376 (K376) is an N6-succinyllysine.

The protein belongs to the enoyl-CoA hydratase/isomerase family.

It is found in the mitochondrion. It carries out the reaction 3-hydroxy-2-methylpropanoyl-CoA + H2O = 3-hydroxy-2-methylpropanoate + CoA + H(+). It participates in amino-acid degradation; L-valine degradation. In terms of biological role, hydrolyzes 3-hydroxyisobutyryl-CoA (HIBYL-CoA), a saline catabolite. Has high activity toward isobutyryl-CoA. Could be an isobutyryl-CoA dehydrogenase that functions in valine catabolism. Also hydrolyzes 3-hydroxypropanoyl-CoA. The protein is 3-hydroxyisobutyryl-CoA hydrolase, mitochondrial (Hibch) of Mus musculus (Mouse).